A 239-amino-acid polypeptide reads, in one-letter code: Skn-1 dependent zygotic transcript 1 protein (239 aa).

As to expression, expressed in mesendodermal precursor cells of embryos.

Its function is as follows. May have a role in mesendoderm development during embryogenesis. The sequence is that of Skn-1 dependent zygotic transcript 1 protein (sdz-1) from Caenorhabditis elegans.